We begin with the raw amino-acid sequence, 582 residues long: Protein bps2 (582 aa).

An ATP-binding site is contributed by 28–35; that stretch reads APNAYGKT. Residues 243-281 adopt a coiled-coil conformation; that stretch reads RQSYERQLQEINAQLQKITAQRNEAEIEIRLLEKVLDQI. The region spanning 243-351 is the Zinc-hook domain; the sequence is RQSYERQLQE…KLKELDQISS (109 aa). Zn(2+) is bound by residues C292 and C295. Residues 320-351 are a coiled coil; the sequence is SLYAGIKKEADELLSKKSEIEKKLKELDQISS.

The protein is Protein bps2 (bps2) of Acidianus ambivalens (Desulfurolobus ambivalens).